The chain runs to 243 residues: Probable transcriptional regulatory protein BDU_30 (243 aa).

The protein belongs to the TACO1 family.

It localises to the cytoplasm. The protein is Probable transcriptional regulatory protein BDU_30 of Borrelia duttonii (strain Ly).